The sequence spans 328 residues: Cytochrome c biogenesis protein CcsA (328 aa).

Transmembrane regions (helical) follow at residues isoleucine 13–leucine 33, glycine 46–glycine 66, leucine 73–phenylalanine 93, leucine 101–leucine 121, methionine 146–isoleucine 166, isoleucine 234–asparagine 254, tryptophan 263–isoleucine 283, and alanine 295–leucine 315.

The protein belongs to the CcmF/CycK/Ccl1/NrfE/CcsA family. In terms of assembly, may interact with Ccs1.

The protein localises to the plastid. Its subcellular location is the chloroplast thylakoid membrane. Functionally, required during biogenesis of c-type cytochromes (cytochrome c6 and cytochrome f) at the step of heme attachment. The protein is Cytochrome c biogenesis protein CcsA of Crucihimalaya wallichii (Rock-cress).